Consider the following 232-residue polypeptide: UPF0758 protein Clos_1766 (232 aa).

The MPN domain maps to 110–232 (KIKGPDDVSN…YFSMKEHKLI (123 aa)). The Zn(2+) site is built by histidine 181, histidine 183, and aspartate 194. Positions 181 to 194 (HNHPSGDPNPSGED) match the JAMM motif motif.

The protein belongs to the UPF0758 family.

The protein is UPF0758 protein Clos_1766 of Alkaliphilus oremlandii (strain OhILAs) (Clostridium oremlandii (strain OhILAs)).